Here is a 351-residue protein sequence, read N- to C-terminus: F-box protein At1g47810 (351 aa).

The region spanning 8–54 (LQSLDPIPVDVLFEIFLNLPAKFLARFVCVSKLWAKIIRNQDFIRSF) is the F-box domain.

The polypeptide is F-box protein At1g47810 (Arabidopsis thaliana (Mouse-ear cress)).